A 477-amino-acid polypeptide reads, in one-letter code: P3 protein (477 aa).

The segment at 1–21 (MVFRSGEGHSLQWPGPEGGTG) is disordered. 8 helical membrane passes run 225-245 (PMLLGLLGQFLVMPFYAFLMA), 253-273 (ALALGLIITCSSPGGGGSYLF), 281-301 (VTLAISMTFISTVAATGFLPL), 320-340 (VSKILGTLLFIAIPIAAGVVI), 361-381 (VLLLGGLFLAYRMGVFILAGV), 383-403 (LPIVLVGFTVPLVGLLVGYGL), 417-437 (VSIEVGVQNSLLALAMLQLSL), and 450-470 (FLVALSGTSEMLALVIGHFIY).

The protein belongs to the bile acid:sodium symporter (BASS) (TC 2.A.28) family.

It localises to the membrane. The ubiquitous expression and the conservation of the sequence in distant animal species suggest that the gene codes for a protein with housekeeping functions. This chain is P3 protein (SLC10A3), found in Bos taurus (Bovine).